Here is a 335-residue protein sequence, read N- to C-terminus: Protein BIG1 (335 aa).

A signal peptide spans 1 to 17 (MQTVLKYLLLIMCGSFC). Residues 20–275 (EELQNQTNVP…FDSQLIENNR (256 aa)) lie on the Lumenal side of the membrane. N-linked (GlcNAc...) asparagine glycans are attached at residues Asn-24 and Asn-144. The chain crosses the membrane as a helical span at residues 276-296 (GLLQLIFTILVGYILIQFFFT). The Cytoplasmic portion of the chain corresponds to 297 to 335 (KKTIVDEKITNKKDNVKQTSPQLLKKVQEIQKKPSQQVS).

This sequence belongs to the BIG1 family. N-glycosylated.

The protein localises to the endoplasmic reticulum membrane. Functionally, required for normal beta-1,6-glucan synthesis. In Saccharomyces cerevisiae (strain ATCC 204508 / S288c) (Baker's yeast), this protein is Protein BIG1 (BIG1).